The following is a 201-amino-acid chain: Small ribosomal subunit protein uS4 (201 aa).

Positions 92–155 (ARLDNVVFRL…KSLEVIANSL (64 aa)) constitute an S4 RNA-binding domain.

This sequence belongs to the universal ribosomal protein uS4 family. In terms of assembly, part of the 30S ribosomal subunit. Contacts protein S5. The interaction surface between S4 and S5 is involved in control of translational fidelity.

Functionally, one of the primary rRNA binding proteins, it binds directly to 16S rRNA where it nucleates assembly of the body of the 30S subunit. Its function is as follows. With S5 and S12 plays an important role in translational accuracy. The protein is Small ribosomal subunit protein uS4 of Phocaeicola vulgatus (strain ATCC 8482 / DSM 1447 / JCM 5826 / CCUG 4940 / NBRC 14291 / NCTC 11154) (Bacteroides vulgatus).